Here is a 182-residue protein sequence, read N- to C-terminus: ADP-ribosylation factor-like protein 3 (182 aa).

A lipid anchor (N-myristoyl glycine) is attached at Gly2. The residue at position 5 (Ser5) is a Phosphoserine. GTP is bound by residues Gly24 to Thr31, Thr48, Asp67 to Gln71, Gly70, Asn126 to Asp129, and Ser159 to Leu161. Thr31 and Thr48 together coordinate Mg(2+).

This sequence belongs to the small GTPase superfamily. Arf family. Found in a complex with ARL3, RP2 and UNC119 (or UNC119B); RP2 induces hydrolysis of GTP ARL3 in the complex, leading to the release of UNC119 (or UNC119B). Interacts with RP2; interaction is direct and stimulated with the activated GTP-bound form of ARL3. Interacts with SYS1. The GTP-bound form interacts with ARL2BP and PDE6D. Microtubule-associated protein. May interact with GOLGA4. Interacts with GGA1; the interaction recruits PKD1:PKD2 complex to trans-Golgi network and is required for ciliary targeting of PKD1:PKD2 complex. Interacts with DNAAF9. As to expression, expressed in the retina. Strongly expressed in connecting cilium, the myoid region of the inner segments (IS) and in cone photoreceptors (at protein level).

It is found in the golgi apparatus membrane. Its subcellular location is the cytoplasm. It localises to the cytoskeleton. The protein localises to the spindle. The protein resides in the nucleus. It is found in the microtubule organizing center. Its subcellular location is the centrosome. It localises to the cell projection. The protein localises to the cilium. In terms of biological role, small GTP-binding protein which cycles between an inactive GDP-bound and an active GTP-bound form, and the rate of cycling is regulated by guanine nucleotide exchange factors (GEF) and GTPase-activating proteins (GAP). Required for normal cytokinesis and cilia signaling. Requires assistance from GTPase-activating proteins (GAPs) like RP2 and PDE6D, in order to cycle between inactive GDP-bound and active GTP-bound forms. Required for targeting proteins to the cilium, including myristoylated NPHP3 and prenylated INPP5E. Targets NPHP3 to the ciliary membrane by releasing myristoylated NPHP3 from UNC119B cargo adapter into the cilium. Required for PKD1:PKD2 complex targeting from the trans-Golgi network to the cilium. The chain is ADP-ribosylation factor-like protein 3 (ARL3) from Homo sapiens (Human).